The sequence spans 83 residues: DNA-directed RNA polymerase subunit Rpo5 (83 aa).

The protein belongs to the archaeal Rpo5/eukaryotic RPB5 RNA polymerase subunit family. As to quaternary structure, part of the RNA polymerase complex.

The protein localises to the cytoplasm. The enzyme catalyses RNA(n) + a ribonucleoside 5'-triphosphate = RNA(n+1) + diphosphate. Its function is as follows. DNA-dependent RNA polymerase (RNAP) catalyzes the transcription of DNA into RNA using the four ribonucleoside triphosphates as substrates. In Nitrosopumilus maritimus (strain SCM1), this protein is DNA-directed RNA polymerase subunit Rpo5.